The following is a 212-amino-acid chain: Imidazole glycerol phosphate synthase subunit HisH (212 aa).

Positions 2 to 212 constitute a Glutamine amidotransferase type-1 domain; the sequence is KVAVIDYGMG…KNFLAWDGNV (211 aa). Residue cysteine 82 is the Nucleophile of the active site. Residues histidine 190 and glutamate 192 contribute to the active site.

Heterodimer of HisH and HisF.

It localises to the cytoplasm. It catalyses the reaction 5-[(5-phospho-1-deoxy-D-ribulos-1-ylimino)methylamino]-1-(5-phospho-beta-D-ribosyl)imidazole-4-carboxamide + L-glutamine = D-erythro-1-(imidazol-4-yl)glycerol 3-phosphate + 5-amino-1-(5-phospho-beta-D-ribosyl)imidazole-4-carboxamide + L-glutamate + H(+). The enzyme catalyses L-glutamine + H2O = L-glutamate + NH4(+). It functions in the pathway amino-acid biosynthesis; L-histidine biosynthesis; L-histidine from 5-phospho-alpha-D-ribose 1-diphosphate: step 5/9. Its function is as follows. IGPS catalyzes the conversion of PRFAR and glutamine to IGP, AICAR and glutamate. The HisH subunit catalyzes the hydrolysis of glutamine to glutamate and ammonia as part of the synthesis of IGP and AICAR. The resulting ammonia molecule is channeled to the active site of HisF. In Chromobacterium violaceum (strain ATCC 12472 / DSM 30191 / JCM 1249 / CCUG 213 / NBRC 12614 / NCIMB 9131 / NCTC 9757 / MK), this protein is Imidazole glycerol phosphate synthase subunit HisH.